A 291-amino-acid polypeptide reads, in one-letter code: ATP synthase gamma chain (291 aa).

This sequence belongs to the ATPase gamma chain family. In terms of assembly, F-type ATPases have 2 components, CF(1) - the catalytic core - and CF(0) - the membrane proton channel. CF(1) has five subunits: alpha(3), beta(3), gamma(1), delta(1), epsilon(1). CF(0) has three main subunits: a, b and c.

It is found in the cell membrane. In terms of biological role, produces ATP from ADP in the presence of a proton gradient across the membrane. The gamma chain is believed to be important in regulating ATPase activity and the flow of protons through the CF(0) complex. This Streptococcus uberis (strain ATCC BAA-854 / 0140J) protein is ATP synthase gamma chain.